Consider the following 873-residue polypeptide: Aminopeptidase M1-D (873 aa).

A required for membrane association region spans residues L96–V203. Residues E136 and G269–N273 contribute to the substrate site. Residue H305 coordinates Zn(2+). E306 functions as the Proton acceptor in the catalytic mechanism. Positions 309 and 328 each coordinate Zn(2+). Residues L721–L722 carry the Dileucine internalization motif motif.

The protein belongs to the peptidase M1 family. Homodimer. It depends on Zn(2+) as a cofactor.

Its subcellular location is the membrane. It is found in the microsome membrane. The protein resides in the cytoplasm. It catalyses the reaction Release of an N-terminal amino acid, Xaa-|-Yaa- from a peptide, amide or arylamide. Xaa is preferably Ala, but may be most amino acids including Pro (slow action). When a terminal hydrophobic residue is followed by a prolyl residue, the two may be released as an intact Xaa-Pro dipeptide.. This chain is Aminopeptidase M1-D, found in Oryza sativa subsp. japonica (Rice).